Here is a 705-residue protein sequence, read N- to C-terminus: Polyribonucleotide nucleotidyltransferase (705 aa).

Residues D487 and D493 each contribute to the Mg(2+) site. In terms of domain architecture, KH spans 554–613; the sequence is PKILTMKINPDKIRDVIGPSGKQINKIIEDTGVKIDIEQDGTIFISSTEEDMNQKAKKII. The region spanning 623 to 691 is the S1 motif domain; sequence GQLYLGKVKR…KQGRVNLSRK (69 aa).

The protein belongs to the polyribonucleotide nucleotidyltransferase family. Requires Mg(2+) as cofactor.

The protein localises to the cytoplasm. The catalysed reaction is RNA(n+1) + phosphate = RNA(n) + a ribonucleoside 5'-diphosphate. In terms of biological role, involved in mRNA degradation. Catalyzes the phosphorolysis of single-stranded polyribonucleotides processively in the 3'- to 5'-direction. The polypeptide is Polyribonucleotide nucleotidyltransferase (Bacillus pumilus (strain SAFR-032)).